The primary structure comprises 56 residues: Large ribosomal subunit protein bL32 (56 aa).

The disordered stretch occupies residues 1 to 21; it reads MAVQKNKPTRSKRGMRRSHDA. Residues 7-16 are compositionally biased toward basic residues; the sequence is KPTRSKRGMR.

It belongs to the bacterial ribosomal protein bL32 family.

This is Large ribosomal subunit protein bL32 from Hamiltonella defensa subsp. Acyrthosiphon pisum (strain 5AT).